The sequence spans 45 residues: Large ribosomal subunit protein bL34 (45 aa).

It belongs to the bacterial ribosomal protein bL34 family.

In Leifsonia xyli subsp. xyli (strain CTCB07), this protein is Large ribosomal subunit protein bL34.